We begin with the raw amino-acid sequence, 652 residues long: Translation factor guf1, mitochondrial (652 aa).

Residues 1–44 (MSIFRLSRTFSLETCLKSSSFKIRWRFFSVSYASRKLASEDNKP) constitute a mitochondrion transit peptide. A tr-type G domain is found at 56-237 (NRVRNWAVIA…EIIQKIPPPK (182 aa)). GTP-binding positions include 65–72 (AHIDHGKS), 130–134 (DTPGH), and 184–187 (NKVD).

Belongs to the TRAFAC class translation factor GTPase superfamily. Classic translation factor GTPase family. LepA subfamily.

It is found in the mitochondrion inner membrane. It catalyses the reaction GTP + H2O = GDP + phosphate + H(+). Functionally, promotes mitochondrial protein synthesis. May act as a fidelity factor of the translation reaction, by catalyzing a one-codon backward translocation of tRNAs on improperly translocated ribosomes. Binds to mitochondrial ribosomes in a GTP-dependent manner. The polypeptide is Translation factor guf1, mitochondrial (guf1) (Schizosaccharomyces pombe (strain 972 / ATCC 24843) (Fission yeast)).